Consider the following 82-residue polypeptide: Defensin-like protein 208 (82 aa).

Residues 1–29 (MAKNLNTVSFTVLLLVLLMASTGILETEA) form the signal peptide. 3 cysteine pairs are disulfide-bonded: cysteine 38–cysteine 63, cysteine 50–cysteine 76, and cysteine 54–cysteine 78.

It belongs to the DEFL family.

It localises to the secreted. This chain is Defensin-like protein 208, found in Arabidopsis thaliana (Mouse-ear cress).